We begin with the raw amino-acid sequence, 672 residues long: DNA ligase (672 aa).

Residues 34-38 (DAEYD), 83-84 (SL), and Glu-117 each bind NAD(+). Lys-119 serves as the catalytic N6-AMP-lysine intermediate. Arg-140, Glu-177, Lys-293, and Lys-317 together coordinate NAD(+). Positions 411, 414, 429, and 434 each coordinate Zn(2+). The region spanning 591-672 (RVGGRFTGKT…FLAMLGVCRT (82 aa)) is the BRCT domain.

It belongs to the NAD-dependent DNA ligase family. LigA subfamily. It depends on Mg(2+) as a cofactor. The cofactor is Mn(2+).

The catalysed reaction is NAD(+) + (deoxyribonucleotide)n-3'-hydroxyl + 5'-phospho-(deoxyribonucleotide)m = (deoxyribonucleotide)n+m + AMP + beta-nicotinamide D-nucleotide.. Its function is as follows. DNA ligase that catalyzes the formation of phosphodiester linkages between 5'-phosphoryl and 3'-hydroxyl groups in double-stranded DNA using NAD as a coenzyme and as the energy source for the reaction. It is essential for DNA replication and repair of damaged DNA. The polypeptide is DNA ligase (Geotalea uraniireducens (strain Rf4) (Geobacter uraniireducens)).